Consider the following 414-residue polypeptide: Poly(3-hydroxyalkanoate) depolymerase C (414 aa).

The first 37 residues, 1–37 (MLAKQIKKANSRSTLLRKSLLFAAPIILAVSSSSVYA), serve as a signal peptide directing secretion. S154 acts as the Charge relay system in catalysis.

This sequence belongs to the AB hydrolase superfamily. Lipase family.

The protein resides in the secreted. In terms of biological role, specific for poly(hydroxyalkanoic acid) consisting of monomers of four or five carbon atoms and for P-nitrophenylbutyrate as substrates. This is Poly(3-hydroxyalkanoate) depolymerase C (phaZ1) from Paucimonas lemoignei (Pseudomonas lemoignei).